The following is a 361-amino-acid chain: Chorismate synthase (361 aa).

NADP(+)-binding residues include Arg-48 and Arg-54. Residues 125 to 127, 238 to 239, Gly-278, 293 to 297, and Arg-319 contribute to the FMN site; these read RSS, NA, and KPTSS.

This sequence belongs to the chorismate synthase family. In terms of assembly, homotetramer. It depends on FMNH2 as a cofactor.

The enzyme catalyses 5-O-(1-carboxyvinyl)-3-phosphoshikimate = chorismate + phosphate. The protein operates within metabolic intermediate biosynthesis; chorismate biosynthesis; chorismate from D-erythrose 4-phosphate and phosphoenolpyruvate: step 7/7. In terms of biological role, catalyzes the anti-1,4-elimination of the C-3 phosphate and the C-6 proR hydrogen from 5-enolpyruvylshikimate-3-phosphate (EPSP) to yield chorismate, which is the branch point compound that serves as the starting substrate for the three terminal pathways of aromatic amino acid biosynthesis. This reaction introduces a second double bond into the aromatic ring system. The sequence is that of Chorismate synthase from Klebsiella pneumoniae subsp. pneumoniae (strain ATCC 700721 / MGH 78578).